The chain runs to 682 residues: Glutamine--fructose-6-phosphate aminotransferase [isomerizing] 2 (682 aa).

Cys-2 functions as the For GATase activity in the catalytic mechanism. In terms of domain architecture, Glutamine amidotransferase type-2 spans Cys-2 to Gly-288. Ser-244 bears the Phosphoserine mark. SIS domains lie at His-360 to Ser-499 and Leu-531 to Pro-672. Residues Thr-377–Ser-378, Ser-422–Ser-424, Thr-427, and His-578 each bind substrate.

In terms of tissue distribution, highest levels of expression in heart, placenta, and spinal cord.

The enzyme catalyses D-fructose 6-phosphate + L-glutamine = D-glucosamine 6-phosphate + L-glutamate. Its pathway is nucleotide-sugar biosynthesis; UDP-N-acetyl-alpha-D-glucosamine biosynthesis; alpha-D-glucosamine 6-phosphate from D-fructose 6-phosphate: step 1/1. Its function is as follows. Controls the flux of glucose into the hexosamine pathway. Most likely involved in regulating the availability of precursors for N- and O-linked glycosylation of proteins. The protein is Glutamine--fructose-6-phosphate aminotransferase [isomerizing] 2 (GFPT2) of Homo sapiens (Human).